We begin with the raw amino-acid sequence, 126 residues long: MHAIMLKAKLHRAQVTHSVLDYEGSCAIDGEWLDLAGIREYEQIQIYNVDNGERFTTYAIRGEEGSRIISVNGAAAHKAGVGHRLIICAYAHYSEAELANFKPHVLYMGADGELSHTSNAIPVQVA.

The active-site Schiff-base intermediate with substrate; via pyruvic acid is the Ser25. Ser25 is subject to Pyruvic acid (Ser). Thr57 contributes to the substrate binding site. The active-site Proton donor is the Tyr58. 73 to 75 contributes to the substrate binding site; sequence GAA.

The protein belongs to the PanD family. Heterooctamer of four alpha and four beta subunits. The cofactor is pyruvate. Post-translationally, is synthesized initially as an inactive proenzyme, which is activated by self-cleavage at a specific serine bond to produce a beta-subunit with a hydroxyl group at its C-terminus and an alpha-subunit with a pyruvoyl group at its N-terminus.

It is found in the cytoplasm. The enzyme catalyses L-aspartate + H(+) = beta-alanine + CO2. It participates in cofactor biosynthesis; (R)-pantothenate biosynthesis; beta-alanine from L-aspartate: step 1/1. Its function is as follows. Catalyzes the pyruvoyl-dependent decarboxylation of aspartate to produce beta-alanine. The protein is Aspartate 1-decarboxylase of Stutzerimonas stutzeri (strain A1501) (Pseudomonas stutzeri).